Consider the following 356-residue polypeptide: sn-glycerol-3-phosphate import ATP-binding protein UgpC (356 aa).

One can recognise an ABC transporter domain in the interval 4-235; that stretch reads LKLQAVTKSW…PASLFVASFI (232 aa). 37–44 contributes to the ATP binding site; that stretch reads GPSGCGKS.

It belongs to the ABC transporter superfamily. sn-glycerol-3-phosphate importer (TC 3.A.1.1.3) family. In terms of assembly, the complex is composed of two ATP-binding proteins (UgpC), two transmembrane proteins (UgpA and UgpE) and a solute-binding protein (UgpB).

The protein resides in the cell inner membrane. It carries out the reaction sn-glycerol 3-phosphate(out) + ATP + H2O = sn-glycerol 3-phosphate(in) + ADP + phosphate + H(+). Part of the ABC transporter complex UgpBAEC involved in sn-glycerol-3-phosphate (G3P) import. Responsible for energy coupling to the transport system. The sequence is that of sn-glycerol-3-phosphate import ATP-binding protein UgpC from Shigella boydii serotype 4 (strain Sb227).